We begin with the raw amino-acid sequence, 331 residues long: Putative mitochondrial 2-oxoglutarate/malate carrier protein (331 aa).

3 Solcar repeats span residues 39 to 128, 140 to 231, and 239 to 329; these read VRAA…FMSR, VGFK…AKAQ, and SSKV…LGWL. A run of 6 helical transmembrane segments spans residues 42-62, 103-121, 148-168, 199-219, 245-265, and 309-329; these read ALPFINGGLSGMVATTVIQPI, GLSAGLLRQAVYTTARIGC, AGLAAGGLAAMIGNPADLALI, GVAALWAGAAPTVVRAMALNF, LSASAIAGFFASFFSLPFDFV, and YVRIAPHAMVTLLVADYLGWL.

Belongs to the mitochondrial carrier (TC 2.A.29) family.

It localises to the mitochondrion inner membrane. Its function is as follows. Catalyzes the transport of 2-oxoglutarate across the inner mitochondrial membrane. This chain is Putative mitochondrial 2-oxoglutarate/malate carrier protein (mic-33), found in Neurospora crassa (strain ATCC 24698 / 74-OR23-1A / CBS 708.71 / DSM 1257 / FGSC 987).